A 306-amino-acid chain; its full sequence is 5'-hydroxyaverantin dehydrogenase (306 aa).

Residues Ser-25, Ile-27, Gln-48, Lys-52, and Asp-73 each coordinate NADP(+). Ser-173 serves as the catalytic Proton donor. NADP(+) contacts are provided by Tyr-187, Lys-191, Val-220, and Thr-222. The Proton acceptor role is filled by Tyr-187. Lys-191 acts as the Lowers pKa of active site Tyr in catalysis.

The protein belongs to the short-chain dehydrogenases/reductases (SDR) family. As to quaternary structure, homodimer.

The protein localises to the cytoplasm. Its subcellular location is the cytosol. The enzyme catalyses (1'S,5'S)-5'-hydroxyaverantin + NAD(+) = (S)-5'-oxoaverantin + NADH + H(+). The catalysed reaction is (1'S,5'R)-5'-hydroxyaverantin + NAD(+) = (S)-5'-oxoaverantin + NADH + 2 H(+). It participates in mycotoxin biosynthesis. Functionally, 5'-hydroxyaverantin dehydrogenase; part of the fragmented gene cluster that mediates the biosynthesis of dothistromin (DOTH), a polyketide toxin very similar in structure to the aflatoxin precursor, versicolorin B. The first step of the pathway is the conversion of acetate to norsolorinic acid (NOR) and requires the fatty acid synthase subunits hexA and hexB, as well as the polyketide synthase pksA. PksA combines a hexanoyl starter unit and 7 malonyl-CoA extender units to synthesize the precursor NOR. The hexanoyl starter unit is provided to the acyl-carrier protein (ACP) domain by the fungal fatty acid synthase hexA/hexB. The second step is the conversion of NOR to averantin (AVN) and requires the norsolorinic acid ketoreductase nor1, which catalyzes the dehydration of norsolorinic acid to form (1'S)-averantin. The cytochrome P450 monooxygenase avnA then catalyzes the hydroxylation of AVN to 5'hydroxyaverantin (HAVN). The next step is performed by adhA that transforms HAVN to averufin (AVF). Averufin might then be converted to hydroxyversicolorone by cypX and avfA. Hydroxyversicolorone is further converted versiconal hemiacetal acetate (VHA) by moxY. VHA is then the substrate for the versiconal hemiacetal acetate esterase est1 to yield versiconal (VAL). Versicolorin B synthase vbsA then converts VAL to versicolorin B (VERB) by closing the bisfuran ring. Then, the activity of the versicolorin B desaturase verB leads to versicolorin A (VERA). DotB, a predicted chloroperoxidase, may perform epoxidation of the A-ring of VERA. Alternatively, a cytochrome P450, such as cypX or avnA could catalyze this step. It is also possible that another, uncharacterized, cytochrome P450 enzyme is responsible for this step. Opening of the epoxide could potentially be achieved by the epoxide hydrolase epoA. However, epoA seems not to be required for DOTH biosynthesis, but other epoxide hydrolases may have the ability to complement this hydrolysis. Alternatively, opening of the epoxide ring could be achieved non-enzymatically. The next step is the deoxygenation of ring A to yield the 5,8-dihydroxyanthraquinone which is most likely catalyzed by the NADPH dehydrogenase encoded by ver1. The last stages of DOTH biosynthesis are proposed to involve hydroxylation of the bisfuran. OrdB and norB might have oxidative roles here. An alternative possibility is that cytochrome P450 monoogenases such as avnA and cypX might perform these steps in addition to previously proposed steps. This chain is 5'-hydroxyaverantin dehydrogenase, found in Dothistroma septosporum (strain NZE10 / CBS 128990) (Red band needle blight fungus).